The primary structure comprises 110 residues: Ferredoxin (110 aa).

2 4Fe-4S ferredoxin-type domains span residues 2-30 (TYIVTDECVKCKYTDCVEVCPVDCFYEGE) and 31-60 (FMLVINPDECIDCGVCVPDCPIDAIKPESP). The [3Fe-4S] cluster site is built by C9 and C17. Residues C21, C40, C43, and C46 each coordinate [4Fe-4S] cluster. C50 contacts [3Fe-4S] cluster.

Requires [4Fe-4S] cluster as cofactor. [3Fe-4S] cluster serves as cofactor.

In terms of biological role, ferredoxins are iron-sulfur proteins that transfer electrons in a wide variety of metabolic reactions. In Rickettsia typhi (strain ATCC VR-144 / Wilmington), this protein is Ferredoxin (fdxA).